Here is a 657-residue protein sequence, read N- to C-terminus: Threonine--tRNA ligase (657 aa).

The TGS domain maps to 7–70; that stretch reads DRQQVIITLP…TENARVSIIT (64 aa). Residues 253–555 are catalytic; sequence DHRKLGAELG…LIEHTAGNFP (303 aa). Zn(2+) is bound by residues Cys351, His402, and His532.

The protein belongs to the class-II aminoacyl-tRNA synthetase family. In terms of assembly, homodimer. Zn(2+) is required as a cofactor.

The protein localises to the cytoplasm. It catalyses the reaction tRNA(Thr) + L-threonine + ATP = L-threonyl-tRNA(Thr) + AMP + diphosphate + H(+). In terms of biological role, catalyzes the attachment of threonine to tRNA(Thr) in a two-step reaction: L-threonine is first activated by ATP to form Thr-AMP and then transferred to the acceptor end of tRNA(Thr). Also edits incorrectly charged L-seryl-tRNA(Thr). This is Threonine--tRNA ligase from Chlorobaculum tepidum (strain ATCC 49652 / DSM 12025 / NBRC 103806 / TLS) (Chlorobium tepidum).